We begin with the raw amino-acid sequence, 310 residues long: Probable RuBisCO transcriptional regulator (310 aa).

In terms of domain architecture, HTH lysR-type spans 6 to 63; the sequence is FTLDQLRILKAIASEGSFKKAAESLYISQPAVSLQIQNLEKQLNIPIFDRANRKAVFT. Positions 23–42 form a DNA-binding region, H-T-H motif; it reads FKKAAESLYISQPAVSLQIQ.

The protein belongs to the LysR transcriptional regulatory family.

It is found in the plastid. Its subcellular location is the chloroplast. Its function is as follows. Trans-acting transcriptional regulator of RuBisCO genes (rbcL and rbcS) expression. This Guillardia theta (Cryptophyte) protein is Probable RuBisCO transcriptional regulator (rbcR).